The chain runs to 1056 residues: MPRRTDIKKVLLIGSGPIQIGQAAEFDFSGSQACKSLREEGIEVVLVNSNPATIQTDPETADTIYIEPLRASIIAKIIEKEKPDGILSGMGGQTGLNLTAELAELGALRNVEILGTPLEAIYQGEDREKFKALMQKIGEPVPRSMILNRLDQLGEVIEKVGLPVIIRPAYTLGGAGGGIAHTVDELKRIVEIGLQRSRIHQVLIEESVMGWKELEFEVMRDAKDTCVIICSMENVDPMGVHTGESVVVAPILTLRDDEYQMMRSASIKIIRALDVQGGCNIQFAFQDGDYRVIEVNPRVSRSSALASKATGYPIARVAAKIAIGMHLDEITNAVTGCTPASFEPSIDYVVVKVPRWPFDKFTRADRTLTTAMKSTGEVMAIGRTLEEGFKKALRSIDTDINTHTNHNEIRMILTSPTDERFGCIFDAFREGFTVDEIASLTSINPFFLHKMENIVKIERTLATEPTDLRIQEAAAAGFSMKEIAELTGRPVDEVRTAAGDPVYKMVDTCAAEFPATTPYYYSTHGVTTDIIQNDKKKVLILGSGPIRIGQGIEFDYCTVHAVKALREEGVEVHIVNNNPETVSTDFDTSDQLFFEPMQLEDVVNILKTDDYFGVMVQFGGQNAVNLALPLLQEIKKLGLPTAILGSSPDAMDIAEDRDRFSELLDALKIPSPPNSSAYSEEAALAMANKIGFPVLVRPSYVLGGRAMEIVHDNFELESYMKEAMRVSKSHPVLIDSFLQEAIELDVDAVCDGDEVLIGGIMEHIEEAGVHSGDSACVIPTQSLSDSVLARVREYTKKIAMGLGVVGLVNIQLAVKDDIVYVLEANPRASRTVPFVSKATGIPLAKVAAKVMIGKKLKDLGYKERTFRHVAVKEVLLPFNKLPGVDTVLGPEMKSTGEVMGIDYDFGRAYYKACISADNELPIEGNVFISVSTEQKEEVRRIAAQLRDLGLTLFGTKGTVETLMQAGIEANLVRKVQEGSPNVIDMVRKGEIRLIINTPVDKQSRLDHYQIMRAAVDYGIPYITTLQAARAAALAIDAIKREKITLEPISHYLSEVE.

The tract at residues 1-397 (MPRRTDIKKV…GFKKALRSID (397 aa)) is carboxyphosphate synthetic domain. Positions 127, 167, 173, 174, 206, 208, 213, 239, 240, 241, 282, and 294 each coordinate ATP. One can recognise an ATP-grasp 1 domain in the interval 131 to 323 (KALMQKIGEP…IARVAAKIAI (193 aa)). Residues Gln-282, Glu-294, and Asn-296 each contribute to the Mg(2+) site. Mn(2+) contacts are provided by Gln-282, Glu-294, and Asn-296. The interval 398–530 (TDINTHTNHN…YSTHGVTTDI (133 aa)) is oligomerization domain. Residues 531–919 (IQNDKKKVLI…YKACISADNE (389 aa)) form a carbamoyl phosphate synthetic domain region. The ATP-grasp 2 domain occupies 661-852 (SELLDALKIP…LAKVAAKVMI (192 aa)). ATP-binding residues include Arg-697, Ser-736, Leu-738, Glu-743, Gly-768, Val-769, His-770, Ser-771, Gln-811, and Glu-823. Mg(2+) contacts are provided by Gln-811, Glu-823, and Asn-825. 3 residues coordinate Mn(2+): Gln-811, Glu-823, and Asn-825. An MGS-like domain is found at 918–1056 (NELPIEGNVF…PISHYLSEVE (139 aa)). The segment at 920 to 1056 (LPIEGNVFIS…PISHYLSEVE (137 aa)) is allosteric domain.

Belongs to the CarB family. Composed of two chains; the small (or glutamine) chain promotes the hydrolysis of glutamine to ammonia, which is used by the large (or ammonia) chain to synthesize carbamoyl phosphate. Tetramer of heterodimers (alpha,beta)4. Mg(2+) serves as cofactor. Mn(2+) is required as a cofactor.

The enzyme catalyses hydrogencarbonate + L-glutamine + 2 ATP + H2O = carbamoyl phosphate + L-glutamate + 2 ADP + phosphate + 2 H(+). It catalyses the reaction hydrogencarbonate + NH4(+) + 2 ATP = carbamoyl phosphate + 2 ADP + phosphate + 2 H(+). It functions in the pathway amino-acid biosynthesis; L-arginine biosynthesis; carbamoyl phosphate from bicarbonate: step 1/1. Its pathway is pyrimidine metabolism; UMP biosynthesis via de novo pathway; (S)-dihydroorotate from bicarbonate: step 1/3. Functionally, large subunit of the glutamine-dependent carbamoyl phosphate synthetase (CPSase). CPSase catalyzes the formation of carbamoyl phosphate from the ammonia moiety of glutamine, carbonate, and phosphate donated by ATP, constituting the first step of 2 biosynthetic pathways, one leading to arginine and/or urea and the other to pyrimidine nucleotides. The large subunit (synthetase) binds the substrates ammonia (free or transferred from glutamine from the small subunit), hydrogencarbonate and ATP and carries out an ATP-coupled ligase reaction, activating hydrogencarbonate by forming carboxy phosphate which reacts with ammonia to form carbamoyl phosphate. The polypeptide is Carbamoyl phosphate synthase large chain (Methanosphaerula palustris (strain ATCC BAA-1556 / DSM 19958 / E1-9c)).